A 513-amino-acid chain; its full sequence is Ribonuclease Y (513 aa).

A helical transmembrane segment spans residues 4 to 24; that stretch reads TTSLIIAILAGILGIVIGFFF. The segment at 78-106 is disordered; sequence KSRLKEISRQEDRLNSKEENLERKNASLE. Positions 203 to 288 constitute a KH domain; the sequence is TVSVVNLPND…EMVEKARKDV (86 aa). Positions 329-422 constitute an HD domain; it reads VLKHSIEVSN…VQSADAISAA (94 aa).

The protein belongs to the RNase Y family.

It localises to the cell membrane. In terms of biological role, endoribonuclease that initiates mRNA decay. This Finegoldia magna (strain ATCC 29328 / DSM 20472 / WAL 2508) (Peptostreptococcus magnus) protein is Ribonuclease Y.